The following is a 202-amino-acid chain: Ras-related protein Rab-18 (202 aa).

GTP contacts are provided by Ser20, Gly23, Lys24, Ser25, Ser26, Asp37, Pro38, Thr43, Gly69, Lys126, Asp128, and Ala155. Positions 40 to 48 (QAATIGVDF) match the Effector region motif. The disordered stretch occupies residues 183 to 202 (RPTFRLGQPTDTSSGNLCGC). Residues 191–202 (PTDTSSGNLCGC) are compositionally biased toward polar residues. 2 S-geranylgeranyl cysteine lipidation sites follow: Cys200 and Cys202. Cys202 is modified (cysteine methyl ester).

It belongs to the small GTPase superfamily. Rab family.

The enzyme catalyses GTP + H2O = GDP + phosphate + H(+). The small GTPases Rab are key regulators of intracellular membrane trafficking, from the formation of transport vesicles to their fusion with membranes. Rabs cycle between an inactive GDP-bound form and an active GTP-bound form that is able to recruit to membranes different sets of downstream effectors directly responsible for vesicle formation, movement, tethering and fusion. Plays a role in apical endocytosis/recycling. May be implicated in transport between the plasma membrane and early endosomes. The sequence is that of Ras-related protein Rab-18 (rab-18) from Caenorhabditis briggsae.